The sequence spans 529 residues: Bifunctional purine biosynthesis protein PurH (529 aa).

One can recognise an MGS-like domain in the interval 2–149 (TDLHPVRRAL…KNHAFVNVVV (148 aa)).

It belongs to the PurH family.

The enzyme catalyses (6R)-10-formyltetrahydrofolate + 5-amino-1-(5-phospho-beta-D-ribosyl)imidazole-4-carboxamide = 5-formamido-1-(5-phospho-D-ribosyl)imidazole-4-carboxamide + (6S)-5,6,7,8-tetrahydrofolate. It catalyses the reaction IMP + H2O = 5-formamido-1-(5-phospho-D-ribosyl)imidazole-4-carboxamide. It participates in purine metabolism; IMP biosynthesis via de novo pathway; 5-formamido-1-(5-phospho-D-ribosyl)imidazole-4-carboxamide from 5-amino-1-(5-phospho-D-ribosyl)imidazole-4-carboxamide (10-formyl THF route): step 1/1. It functions in the pathway purine metabolism; IMP biosynthesis via de novo pathway; IMP from 5-formamido-1-(5-phospho-D-ribosyl)imidazole-4-carboxamide: step 1/1. In Ruegeria sp. (strain TM1040) (Silicibacter sp.), this protein is Bifunctional purine biosynthesis protein PurH.